Here is a 492-residue protein sequence, read N- to C-terminus: MNLVLPDVSLAPMLPVLLVLVGAIVSTLGGFWLPRRTLTALNILFVLASGASLVWLWGGAPWAAGMDVPRSAFAGALRADPAALLLGGTVLLGALLTLLVSLDTAYRARVSFAEFDALLMYAVTGCLLIAFSGDLIVMLIGLEIMSLASYVLATLQDSRRSQEAGLKYFLLGSVGSAILIYGLAFLYGATGTLNYAGIAQQVSALDPQNIGILVTGTLLVLSGFGVKIALVPFHQWTPDVYSGAPTLVSLFLSTVVKVAAFAGMLRVFGGALAAGPGWHSVLQILVALTLVIGNAAALYQQNFKRLLAYSAVAHTGFLAMTLLGDTAQGGAALGYYLLVYTLMTVGALAVVAALQRTEEGLTINDMRGLYYRHPAYAVALAFCLASLAGLPPFAGFFAKYLAIQVAFQAGYLLISVLAVLSSVAALVYYLRPAMLMFMPDRTPAREYAHGQRPATNVAVALSLIGIVVLGLLPNLWYGWVASPEIWRLLAGT.

14 helical membrane passes run 13–33 (MLPV…GFWL), 43–63 (ILFV…APWA), 82–102 (AALL…LVSL), 110–132 (VSFA…IAFS), 136–155 (IVML…LATL), 169–189 (FLLG…LYGA), 210–230 (IGIL…KIAL), 245–265 (PTLV…AGML), 272–292 (LAAG…TLVI), 306–326 (LLAY…LGDT), 331–351 (AALG…LAVV), 377–397 (AVAL…AGFF), 410–430 (GYLL…VYYL), and 457–477 (VAVA…NLWY).

The protein belongs to the complex I subunit 2 family. NDH-1 is composed of 15 different subunits. Subunits NuoA, H, J, K, L, M, N constitute the membrane sector of the complex.

It localises to the cell membrane. It catalyses the reaction a quinone + NADH + 5 H(+)(in) = a quinol + NAD(+) + 4 H(+)(out). NDH-1 shuttles electrons from NADH, via FMN and iron-sulfur (Fe-S) centers, to quinones in the respiratory chain. The immediate electron acceptor for the enzyme in this species is believed to be a menaquinone. Couples the redox reaction to proton translocation (for every two electrons transferred, four hydrogen ions are translocated across the cytoplasmic membrane), and thus conserves the redox energy in a proton gradient. This chain is NADH-quinone oxidoreductase subunit N, found in Deinococcus radiodurans (strain ATCC 13939 / DSM 20539 / JCM 16871 / CCUG 27074 / LMG 4051 / NBRC 15346 / NCIMB 9279 / VKM B-1422 / R1).